The primary structure comprises 167 residues: uncharacterized protein (167 aa).

Residues 39-59 (LSLFSLSPLFLLLSISSLIFS) traverse the membrane as a helical segment. Residues 92-122 (LGTQIEMITQAMTTLESRVTDLQQESNDHRT) adopt a coiled-coil conformation. The interval 134–167 (RDLGDENRPKPTTNKMIATGEQHKGEVSTSLFHD) is disordered. Residues 154 to 167 (EQHKGEVSTSLFHD) show a composition bias toward basic and acidic residues.

It is found in the mitochondrion membrane. This is an uncharacterized protein from Arabidopsis thaliana (Mouse-ear cress).